Consider the following 335-residue polypeptide: Anthranilate phosphoribosyltransferase 2 (335 aa).

Residues G70, 73–74 (GD), T78, 80–83 (NIST), 98–106 (KHGNRSASS), and S110 contribute to the 5-phospho-alpha-D-ribose 1-diphosphate site. Anthranilate is bound at residue G70. Position 82 (S82) interacts with Mg(2+). Anthranilate is bound at residue N101. Position 156 (R156) interacts with anthranilate. Residues D215 and E216 each coordinate Mg(2+).

It belongs to the anthranilate phosphoribosyltransferase family. As to quaternary structure, homodimer. Mg(2+) is required as a cofactor.

The catalysed reaction is N-(5-phospho-beta-D-ribosyl)anthranilate + diphosphate = 5-phospho-alpha-D-ribose 1-diphosphate + anthranilate. Its pathway is amino-acid biosynthesis; L-tryptophan biosynthesis; L-tryptophan from chorismate: step 2/5. In terms of biological role, catalyzes the transfer of the phosphoribosyl group of 5-phosphorylribose-1-pyrophosphate (PRPP) to anthranilate to yield N-(5'-phosphoribosyl)-anthranilate (PRA). In Streptomyces coelicolor (strain ATCC BAA-471 / A3(2) / M145), this protein is Anthranilate phosphoribosyltransferase 2.